A 604-amino-acid polypeptide reads, in one-letter code: MKPKLVFLPFLIFITVFIEESEAVHPVVLETKLGDIRGNEFFFLSKKIRTFFGVPFAEPPVEEFRFRKPREKKQWKKLFDATKPANACFQTRDNYNTSFWGSEMWNANTQISEDCLYLNIWAPADAYNLTVMVWFFGGGFYSGSPSLSIYDGRALAATQHVIVVNINYRLGPFGFLYLDHPDAPGNMGLLDQQLALHWIRQNIVSFGGNPDKVSVFGQSAGAASIVAHLIAPGSRGLFKNAILQSGSLENTWAINSPFRAKQKSEKLLELVGCNKTTVENSMSCLRLVSPEQLSLSTWNISLTYLEFPFVIVSRDKHFFGHLDARAALREGDFNRDVNLMIGMNKDEGNYWNIYQLPQFFDKAEPPELTRHQFDNLIDSTFSIQPDIIRSAAKYIYSDPNCTDHGRKTRFYAGQMNQIVGDYFFSCDSLWLADQFFLFLQICSTPNGSLKNPPKVFVYYFTQSSSANPWPKWTGAMHGYEIEYVFGVPLSYSKIYKRREQIFSRKIMQFWASFAKNGTPRLRVLKNSEHWPEFNEHNNYRWMQLRSGSNIRPIKRRKETECQFWRRVKDTEYTAYLTQEYSSSCHINSYRILLFIPFFFIFSAF.

The first 23 residues, M1–A23, serve as a signal peptide directing secretion. Residues C88 and C115 are joined by a disulfide bond. N-linked (GlcNAc...) asparagine glycosylation is found at N96 and N128. The active-site Acyl-ester intermediate is the S219. A disulfide bridge links C273 with C284. Residues N274 and N299 are each glycosylated (N-linked (GlcNAc...) asparagine). Residue E347 is the Charge relay system of the active site. N-linked (GlcNAc...) asparagine glycans are attached at residues N400 and N446. C426 and C561 are disulfide-bonded. The active-site Charge relay system is H477.

This sequence belongs to the type-B carboxylesterase/lipase family.

The protein resides in the synapse. The protein localises to the secreted. It localises to the cell membrane. It carries out the reaction acetylcholine + H2O = choline + acetate + H(+). Rapidly hydrolyzes choline released into the synapse. The sequence is that of Acetylcholinesterase 4 (ace-4) from Caenorhabditis briggsae.